Here is a 100-residue protein sequence, read N- to C-terminus: Small ribosomal subunit protein uS14c (100 aa).

Belongs to the universal ribosomal protein uS14 family. Component of the chloroplast small ribosomal subunit (SSU). Mature 70S chloroplast ribosomes of higher plants consist of a small (30S) and a large (50S) subunit. The 30S small subunit contains 1 molecule of ribosomal RNA (16S rRNA) and 24 different proteins. The 50S large subunit contains 3 rRNA molecules (23S, 5S and 4.5S rRNA) and 33 different proteins.

The protein localises to the plastid. Its subcellular location is the chloroplast. Component of the chloroplast ribosome (chloro-ribosome), a dedicated translation machinery responsible for the synthesis of chloroplast genome-encoded proteins, including proteins of the transcription and translation machinery and components of the photosynthetic apparatus. The protein is Small ribosomal subunit protein uS14c of Spinacia oleracea (Spinach).